A 183-amino-acid polypeptide reads, in one-letter code: Apo-citrate lyase phosphoribosyl-dephospho-CoA transferase (183 aa).

The protein belongs to the CitX family.

It carries out the reaction apo-[citrate lyase ACP] + 2'-(5''-triphospho-alpha-D-ribosyl)-3'-dephospho-CoA = holo-[citrate lyase ACP] + diphosphate. Functionally, transfers 2-(5''-triphosphoribosyl)-3'-dephosphocoenzyme-A on a serine residue to the apo-acyl carrier protein (gamma chain) of the citrate lyase to yield holo-acyl carrier protein. This is Apo-citrate lyase phosphoribosyl-dephospho-CoA transferase from Escherichia coli O7:K1 (strain IAI39 / ExPEC).